Here is a 237-residue protein sequence, read N- to C-terminus: Cysteine-rich venom protein DIS1 (237 aa).

A signal peptide spans 1–18 (MFVFILLSLAAVLQQSFG). The region spanning 37-165 (VDKHNAFRRS…SYNYFYVCQY (129 aa)) is the SCP domain. 7 disulfides stabilise this stretch: Cys-74–Cys-152, Cys-91–Cys-166, Cys-147–Cys-163, Cys-185–Cys-192, Cys-188–Cys-197, Cys-201–Cys-234, and Cys-219–Cys-232. A ShKT domain is found at 201–234 (CSREDVFMNCKSLVAQSNCQDDYIRKNCPATCFC).

The protein belongs to the CRISP family. As to expression, expressed by the venom gland.

The protein resides in the secreted. Its function is as follows. Weakly blocks contraction of smooth muscle elicited by high potassium-induced depolarization, but does not block caffeine-stimulated contraction. May target voltage-gated calcium channels on smooth muscle. The chain is Cysteine-rich venom protein DIS1 from Dispholidus typus (Boomslang).